A 352-amino-acid chain; its full sequence is Neutral protease 2 (352 aa).

The signal sequence occupies residues 1-19 (MRVTTLSTALFALASTAVS). A propeptide spanning residues 20-175 (APTAGSSSPG…TKALSQLTRR (156 aa)) is cleaved from the precursor. Disulfide bonds link cysteine 181–cysteine 253, cysteine 260–cysteine 278, and cysteine 292–cysteine 352. Histidine 303 contributes to the Zn(2+) binding site. Glutamate 304 is a catalytic residue. Zn(2+) contacts are provided by histidine 307 and aspartate 318.

It belongs to the peptidase M35 family. The cofactor is Zn(2+).

The enzyme catalyses Preferential cleavage of bonds with hydrophobic residues in P1'. Also 3-Asn-|-Gln-4 and 8-Gly-|-Ser-9 bonds in insulin B chain.. Metalloprotease that shows high activities on basic nuclear substrates such as histone and protamine. This is Neutral protease 2 from Aspergillus oryzae (strain ATCC 42149 / RIB 40) (Yellow koji mold).